The primary structure comprises 163 residues: Cyanate hydratase (163 aa).

Active-site residues include arginine 103, glutamate 106, and serine 129.

Belongs to the cyanase family.

It carries out the reaction cyanate + hydrogencarbonate + 3 H(+) = NH4(+) + 2 CO2. Functionally, catalyzes the reaction of cyanate with bicarbonate to produce ammonia and carbon dioxide. The polypeptide is Cyanate hydratase (Talaromyces stipitatus (strain ATCC 10500 / CBS 375.48 / QM 6759 / NRRL 1006) (Penicillium stipitatum)).